We begin with the raw amino-acid sequence, 189 residues long: UPF0301 protein RMA_0049 (189 aa).

This sequence belongs to the UPF0301 (AlgH) family.

In Rickettsia massiliae (strain Mtu5), this protein is UPF0301 protein RMA_0049.